A 348-amino-acid polypeptide reads, in one-letter code: NAC domain-containing protein 101 (348 aa).

One can recognise an NAC domain in the interval isoleucine 7–lysine 156. A DNA-binding region spans residues valine 107 to asparagine 162. Residues methionine 325–threonine 348 form a disordered region. Positions serine 327–serine 341 are enriched in low complexity.

This sequence belongs to the plant vascular related NAC-domain protein family. Homodimer. Expressed in root inner metaxylem vessels and in hypocotyl vessels. Present in root developing xylems. Accumulates in the xylem but not in interfascicular fibers or pith cells in inflorescence stems. Absent from secondary xylem in roots.

Its subcellular location is the nucleus. Its function is as follows. Transcription activator that binds to the secondary wall NAC binding element (SNBE), 5'-(T/A)NN(C/T)(T/C/G)TNNNNNNNA(A/C)GN(A/C/T)(A/T)-3', and to the tracheary elements (TE) specific regulating cis-element (TERE), 5'-CTTNAAAGCNA-3', in the promoter of target genes (e.g. genes involved in secondary wall biosynthesis, cell wall modification such as xylan accumulation, and programmed cell death). Involved in xylem formation in roots and shoots, especially regulating metaxylem vessel differentiation by promoting immature xylem vessel-specific genes expression, especially genes regulating programmed cell death (PCD) and secondary wall formation in tracheary elements (TE). Can activate MYB25, MYB46, MYB58, MYB63, MYB83, MYB103, CESA4, LBD15, LBD30, ERF115, XCP1, XCP2, NAC010/SND3, KNAT7, ASL19 and ASL20 expression. This is NAC domain-containing protein 101 from Arabidopsis thaliana (Mouse-ear cress).